An 80-amino-acid chain; its full sequence is Conotoxin Vi6.2 (80 aa).

The first 22 residues, 1 to 22 (MKLTCVLITTVLFLTASQLITA), serve as a signal peptide directing secretion. A propeptide spanning residues 23-47 (DYSRDKRQYRAVRLRDEMRNFKGAR) is cleaved from the precursor. 3 cysteine pairs are disulfide-bonded: Cys-49–Cys-62, Cys-56–Cys-67, and Cys-61–Cys-77. 2 positions are modified to 4-hydroxyproline: Pro-60 and Pro-63.

Belongs to the conotoxin O1 superfamily. Expressed by the venom duct.

The protein resides in the secreted. Functionally, ion channel inhibitor that inhibits the increase in intracellular calcium upon depolarization in DRG neurons. In vivo, both intraperitoneal and intracranial injections into mice induce hyperactivity. This chain is Conotoxin Vi6.2, found in Conus virgo (Virgin cone).